Reading from the N-terminus, the 190-residue chain is dCTP deaminase (190 aa).

DCTP-binding positions include Lys-111–Arg-116, Thr-135–Glu-137, Gln-156, Tyr-172, and Gln-182. Glu-137 acts as the Proton donor/acceptor in catalysis.

It belongs to the dCTP deaminase family. In terms of assembly, homotrimer.

It carries out the reaction dCTP + H2O + H(+) = dUTP + NH4(+). It participates in pyrimidine metabolism; dUMP biosynthesis; dUMP from dCTP (dUTP route): step 1/2. In terms of biological role, catalyzes the deamination of dCTP to dUTP. This Stenotrophomonas maltophilia (strain K279a) protein is dCTP deaminase.